The following is a 356-amino-acid chain: Guanine nucleotide-binding protein alpha-2 subunit (356 aa).

Residues 1–25 (MGLCQSEEEKVGSQKSRAIDKEIKQ) are disordered. Gly2 carries N-myristoyl glycine lipidation. Cys4 carries S-palmitoyl cysteine lipidation. The segment covering 7–25 (EEEKVGSQKSRAIDKEIKQ) has biased composition (basic and acidic residues). The 325-residue stretch at 14–338 (QKSRAIDKEI…TDTNQVQKIL (325 aa)) folds into the G-alpha domain. The tract at residues 17 to 30 (RAIDKEIKQNQSND) is G1 motif. GTP contacts are provided by Gln25, Gln27, Ser28, Asn29, Asp30, Val135, Glu160, Ala166, Val188, Glu254, Ser255, Cys257, and Phe310. Asn29 is a binding site for Mg(2+). The interval 158-166 (FFENLDRIA) is G2 motif. Ala166 contacts Mg(2+). The tract at residues 181–190 (RTKTTGIVEV) is G3 motif. Residues 250–257 (MRLFESIC) form a G4 motif region. Residues 308-313 (QKFEAL) form a G5 motif region.

The protein belongs to the G-alpha family. G(q) subfamily. G proteins are composed of 3 units; alpha, beta and gamma. The alpha chain contains the guanine nucleotide binding site. Mg(2+) serves as cofactor.

Its function is as follows. Guanine nucleotide-binding proteins (G proteins) are involved as modulators or transducers in various transmembrane signaling systems. Involved in behavioral responses to P.aeruginosa by controlling the expression of daf-7, a member of the TGF-beta family, in ASJ sensory neurons. In Caenorhabditis briggsae, this protein is Guanine nucleotide-binding protein alpha-2 subunit (gpa-2).